Reading from the N-terminus, the 259-residue chain is Phosphate import ATP-binding protein PstB 1 (259 aa).

The ABC transporter domain occupies 13–254 (IQVRGLEFFY…PSKTQTEDYI (242 aa)). 45–52 (GPSGCGKS) contacts ATP.

It belongs to the ABC transporter superfamily. Phosphate importer (TC 3.A.1.7) family. In terms of assembly, the complex is composed of two ATP-binding proteins (PstB), two transmembrane proteins (PstC and PstA) and a solute-binding protein (PstS).

It localises to the cell inner membrane. It catalyses the reaction phosphate(out) + ATP + H2O = ADP + 2 phosphate(in) + H(+). In terms of biological role, part of the ABC transporter complex PstSACB involved in phosphate import. Responsible for energy coupling to the transport system. The chain is Phosphate import ATP-binding protein PstB 1 from Pseudomonas syringae pv. tomato (strain ATCC BAA-871 / DC3000).